We begin with the raw amino-acid sequence, 286 residues long: Phosphate import ATP-binding protein PstB (286 aa).

Positions 1–27 (MEPKETLRQRWPGRGRTEETGAMKKSD) are disordered. Basic and acidic residues predominate over residues 15–27 (GRTEETGAMKKSD). An ABC transporter domain is found at 33 to 281 (MTVEHLNMYY…PDRKETEDYV (249 aa)). An ATP-binding site is contributed by 65 to 72 (GPSGCGKS).

The protein belongs to the ABC transporter superfamily. Phosphate importer (TC 3.A.1.7) family. The complex is composed of two ATP-binding proteins (PstB), two transmembrane proteins (PstC and PstA) and a solute-binding protein (PstS).

It is found in the cell membrane. It carries out the reaction phosphate(out) + ATP + H2O = ADP + 2 phosphate(in) + H(+). Functionally, part of the ABC transporter complex PstSACB involved in phosphate import. Responsible for energy coupling to the transport system. The sequence is that of Phosphate import ATP-binding protein PstB from Rubrobacter xylanophilus (strain DSM 9941 / JCM 11954 / NBRC 16129 / PRD-1).